The primary structure comprises 260 residues: MALRRPMVAGNWKMNGSAALAQELFKKFASKLQNDSAEVVLCPPSIYLESVRQLLEANKEALDGSLVRMGAQNLSQHDFGAYTGEVSGQMLKDCGCRYVIIGHSERRRMYGETSNIVAEKFAAAQKHGLTPILCVGESGPAREARRTFEVIAEELDIVIQKNGTMAFDNAIIAYEPLWAVGTGKSATPEQAQEVHAFIRKRLSEVSPFIGENIRILYGGSVTPSNAADLFAQPDVDGGLIGGASLNSTEFLSLCTIAMSA.

N11–K13 provides a ligand contact to substrate. H103 functions as the Electrophile in the catalytic mechanism. E175 acts as the Proton acceptor in catalysis. Substrate is bound by residues G181, S220, and G241–G242.

It belongs to the triosephosphate isomerase family. Homodimer.

It localises to the cytoplasm. The enzyme catalyses D-glyceraldehyde 3-phosphate = dihydroxyacetone phosphate. It participates in carbohydrate biosynthesis; gluconeogenesis. The protein operates within carbohydrate degradation; glycolysis; D-glyceraldehyde 3-phosphate from glycerone phosphate: step 1/1. Its function is as follows. Involved in the gluconeogenesis. Catalyzes stereospecifically the conversion of dihydroxyacetone phosphate (DHAP) to D-glyceraldehyde-3-phosphate (G3P). The polypeptide is Triosephosphate isomerase (Shewanella sp. (strain MR-7)).